An 89-amino-acid polypeptide reads, in one-letter code: Sec-independent protein translocase protein TatA (89 aa).

A helical membrane pass occupies residues 1–21; sequence MGGISIWQLLIIALIVVLLFG. Residues 47-61 show a composition bias toward basic and acidic residues; sequence EEKKALEENATDKPA. Residues 47-89 form a disordered region; that stretch reads EEKKALEENATDKPAADTAKVTETAKVAETAEKKAESKGKEQA. Over residues 62–74 the composition is skewed to low complexity; it reads ADTAKVTETAKVA. Over residues 75–89 the composition is skewed to basic and acidic residues; that stretch reads ETAEKKAESKGKEQA.

Belongs to the TatA/E family. The Tat system comprises two distinct complexes: a TatABC complex, containing multiple copies of TatA, TatB and TatC subunits, and a separate TatA complex, containing only TatA subunits. Substrates initially bind to the TatABC complex, which probably triggers association of the separate TatA complex to form the active translocon.

Its subcellular location is the cell inner membrane. In terms of biological role, part of the twin-arginine translocation (Tat) system that transports large folded proteins containing a characteristic twin-arginine motif in their signal peptide across membranes. TatA could form the protein-conducting channel of the Tat system. The protein is Sec-independent protein translocase protein TatA of Shewanella pealeana (strain ATCC 700345 / ANG-SQ1).